Here is a 358-residue protein sequence, read N- to C-terminus: tRNA-specific 2-thiouridylase MnmA (358 aa).

Residues 8–15 and M34 each bind ATP; that span reads GMSGGVDS. The Nucleophile role is filled by C103. The cysteines at positions 103 and 199 are disulfide-linked. An ATP-binding site is contributed by G127. An interaction with tRNA region spans residues 149–151; it reads KDQ. Catalysis depends on C199, which acts as the Cysteine persulfide intermediate. The interval 305 to 306 is interaction with tRNA; the sequence is RY.

It belongs to the MnmA/TRMU family.

Its subcellular location is the cytoplasm. The catalysed reaction is S-sulfanyl-L-cysteinyl-[protein] + uridine(34) in tRNA + AH2 + ATP = 2-thiouridine(34) in tRNA + L-cysteinyl-[protein] + A + AMP + diphosphate + H(+). Catalyzes the 2-thiolation of uridine at the wobble position (U34) of tRNA, leading to the formation of s(2)U34. This is tRNA-specific 2-thiouridylase MnmA from Clostridium beijerinckii (strain ATCC 51743 / NCIMB 8052) (Clostridium acetobutylicum).